The following is a 188-amino-acid chain: Elongation factor P (188 aa).

This sequence belongs to the elongation factor P family.

Its subcellular location is the cytoplasm. It functions in the pathway protein biosynthesis; polypeptide chain elongation. Involved in peptide bond synthesis. Stimulates efficient translation and peptide-bond synthesis on native or reconstituted 70S ribosomes in vitro. Probably functions indirectly by altering the affinity of the ribosome for aminoacyl-tRNA, thus increasing their reactivity as acceptors for peptidyl transferase. This Nitrobacter winogradskyi (strain ATCC 25391 / DSM 10237 / CIP 104748 / NCIMB 11846 / Nb-255) protein is Elongation factor P.